The sequence spans 4022 residues: Intermembrane lipid transfer protein VPS13B (4022 aa).

The Chorein N-terminal domain occupies 2–102 (LESYVTPILM…KDGIQDDHES (101 aa)). Positions 100–134 (HESCGSNSTNRSTAESTKSSIKPRRMQQAAPTDPD) are disordered. The span at 103–119 (CGSNSTNRSTAESTKSS) shows a compositional bias: polar residues. A phosphoserine mark is found at serine 414, serine 999, serine 1002, and serine 1033. A disordered region spans residues 1247-1314 (NLSPTSPETM…SVTLEQTTSN (68 aa)). Composition is skewed to polar residues over residues 1264 to 1292 (PVRS…TEGD) and 1302 to 1314 (FSDS…TTSN). Serine 1815 carries the post-translational modification Phosphoserine. Residues 1860-1872 (KSQEQKNNEKTDK) are compositionally biased toward basic and acidic residues. Residues 1860 to 1880 (KSQEQKNNEKTDKSSLNLPEV) form a disordered region. Residues 2631–2716 (HFVICNDTQE…RTASLIIKVQ (86 aa)) enclose the SHR-BD domain. The segment at 3908-4022 (AFPVTEIDCA…KNKALRKGFP (115 aa)) is localizes the protein to the Golgi apparatus.

It belongs to the VPS13 family. In terms of assembly, interacts with STX6. Interacts with STX12. Interacts with RAB6A isoform 1 (GTP-bound) and isoform 2 (GTP-bound). Interacts with RAB6B (GTP-bound). Widely expressed. There is apparent differential expression of different transcripts. In fetal brain, lung, liver, and kidney, two transcripts of 2 and 5 kb are identified. These transcripts are also seen in all adult tissues analyzed. A larger transcript (12-14 kb) is expressed in prostate, testis, ovary, and colon in the adult. Expression is very low in adult brain tissue. Expressed in peripheral blood lymphocytes. Isoform 1 and isoform 2 are expressed in brain and retina. Isoform 2 is expressed ubiquitously.

The protein resides in the recycling endosome membrane. It is found in the cytoplasmic vesicle. The protein localises to the secretory vesicle. Its subcellular location is the acrosome membrane. It localises to the golgi apparatus. The protein resides in the cis-Golgi network membrane. It is found in the endoplasmic reticulum-Golgi intermediate compartment membrane. The protein localises to the trans-Golgi network membrane. Its subcellular location is the early endosome membrane. It localises to the lysosome membrane. Functionally, mediates the transfer of lipids between membranes at organelle contact sites. Binds phosphatidylinositol 3-phosphate. Functions as a tethering factor in the slow endocytic recycling pathway, to assist traffic between early and recycling endosomes. Involved in the transport of proacrosomal vesicles to the nuclear dense lamina (NDL) during spermatid development. Plays a role in the assembly of the Golgi apparatus, possibly by mediating trafficking to the Golgi membrane. Plays a role in the development of the nervous system, and may be required for neuron projection development. May also play a role during adipose tissue development. Required for maintenance of the ocular lens. The polypeptide is Intermembrane lipid transfer protein VPS13B (VPS13B) (Homo sapiens (Human)).